We begin with the raw amino-acid sequence, 364 residues long: BTB/POZ and TAZ domain-containing protein 2 (364 aa).

One can recognise a BTB domain in the interval 34–106 (SDVEIVTSDN…LYSSSLTEDE (73 aa)). The Nuclear localization signal motif lies at 203 to 212 (RKKRRRRHRK). The segment at 215-316 (DLYMQLSEAM…PDSCRVPLCR (102 aa)) adopts a TAZ-type zinc-finger fold. The tract at residues 327-350 (KMGEDTKWKLLVTRVVSAKAMTSL) is caM-binding.

As to quaternary structure, interacts with CUL3A. Interacts with GTE11/BET10 through the BTB domain. In terms of tissue distribution, preferentially expressed in young leaves and roots.

The protein resides in the nucleus. The protein localises to the cytoplasm. The protein operates within protein modification; protein ubiquitination. In terms of biological role, may act as a substrate-specific adapter of an E3 ubiquitin-protein ligase complex (CUL3-RBX1-BTB) which mediates the ubiquitination and subsequent proteasomal degradation of target proteins. Plays a key role as a component of the TAC1-mediated telomerase activation pathway certainly by targeting a telomerase repressor to degradation. Seems to occupy an integral position in a complex signaling network that perceives, integrates, and responds to multiple, and sometimes competing, signals. Enhances responses to auxin in postgermination and vegetative development. Also negatively regulates ABA- and sugar-mediated inhibition of the germination. Essential for female and male gametophyte development. This Arabidopsis thaliana (Mouse-ear cress) protein is BTB/POZ and TAZ domain-containing protein 2 (BT2).